Reading from the N-terminus, the 391-residue chain is NAD(P)H-quinone oxidoreductase subunit H, chloroplastic (391 aa).

It belongs to the complex I 49 kDa subunit family. As to quaternary structure, NDH is composed of at least 16 different subunits, 5 of which are encoded in the nucleus.

It is found in the plastid. Its subcellular location is the chloroplast thylakoid membrane. The catalysed reaction is a plastoquinone + NADH + (n+1) H(+)(in) = a plastoquinol + NAD(+) + n H(+)(out). It carries out the reaction a plastoquinone + NADPH + (n+1) H(+)(in) = a plastoquinol + NADP(+) + n H(+)(out). In terms of biological role, NDH shuttles electrons from NAD(P)H:plastoquinone, via FMN and iron-sulfur (Fe-S) centers, to quinones in the photosynthetic chain and possibly in a chloroplast respiratory chain. The immediate electron acceptor for the enzyme in this species is believed to be plastoquinone. Couples the redox reaction to proton translocation, and thus conserves the redox energy in a proton gradient. This chain is NAD(P)H-quinone oxidoreductase subunit H, chloroplastic, found in Physcomitrium patens (Spreading-leaved earth moss).